The primary structure comprises 234 residues: Opacity protein opA51 (234 aa).

A1 is a signal peptide.

The protein belongs to the opacity porin family.

The protein localises to the cell outer membrane. In terms of biological role, implicated in a number of adherence functions. OPA proteins are implicated in pathogenesis and are subject to phase variation. This is Opacity protein opA51 (opaB) from Neisseria gonorrhoeae.